The chain runs to 223 residues: 7-carboxy-7-deazaguanine synthase (223 aa).

Residues Leu12–Gly14 and Arg27 contribute to the substrate site. The region spanning Phe18–Ala223 is the Radical SAM core domain. [4Fe-4S] cluster contacts are provided by Cys31, Cys35, and Cys38. Residue Thr40 coordinates Mg(2+). Thr92 contacts substrate. Residues Gly94 and Ser136 to Lys138 contribute to the S-adenosyl-L-methionine site.

It belongs to the radical SAM superfamily. 7-carboxy-7-deazaguanine synthase family. In terms of assembly, homodimer. It depends on [4Fe-4S] cluster as a cofactor. S-adenosyl-L-methionine serves as cofactor. Mg(2+) is required as a cofactor.

It catalyses the reaction 6-carboxy-5,6,7,8-tetrahydropterin + H(+) = 7-carboxy-7-deazaguanine + NH4(+). The protein operates within purine metabolism; 7-cyano-7-deazaguanine biosynthesis. Functionally, catalyzes the complex heterocyclic radical-mediated conversion of 6-carboxy-5,6,7,8-tetrahydropterin (CPH4) to 7-carboxy-7-deazaguanine (CDG), a step common to the biosynthetic pathways of all 7-deazapurine-containing compounds. The polypeptide is 7-carboxy-7-deazaguanine synthase (Escherichia coli (strain K12)).